The sequence spans 252 residues: Electron transfer flavoprotein subunit beta (252 aa).

This sequence belongs to the ETF beta-subunit/FixA family. Heterodimer of an alpha and a beta subunit. It depends on AMP as a cofactor.

The protein localises to the cytoplasm. Its pathway is lipid metabolism; butanoate metabolism. Part of an electron transfer flavoprotein involved in syntrophic growth of S.wolfei with butyrate. Probably receives electrons from butyryl-CoA dehydrogenases, and transfers them to the membrane-bound quinone oxidoreductase Swol_0698. This chain is Electron transfer flavoprotein subunit beta, found in Syntrophomonas wolfei subsp. wolfei (strain DSM 2245B / Goettingen).